Reading from the N-terminus, the 246-residue chain is MVKEFVQDEEKQRLLLDEHTEKHFTAGEVVRDIIIGVSDGLTVPFALAAGLSGANAPSALVLTAGLAEVAAGAISMGLGGYLAAKSDADHYHRELQREQEEIDTVPDTEAAEIADILSQYGLGPEEYGPVVNSLRSNPKAWLEFMMKFELGLEKPEPRRALMSAGTIALAYVVGGLVPLLPYMFVPTADRAMATSVVVTLAALLFFGYVKGRFTGNRPFISAFQTAVIGALASAAAFGMAKAVQSI.

At 1 to 32 (MVKEFVQDEEKQRLLLDEHTEKHFTAGEVVRD) the chain is on the cytoplasmic side. Residues 33-53 (IIIGVSDGLTVPFALAAGLSG) form a helical membrane-spanning segment. Residues 54-58 (ANAPS) lie on the Vacuolar side of the membrane. A helical transmembrane segment spans residues 59 to 79 (ALVLTAGLAEVAAGAISMGLG). Over 80-164 (GYLAAKSDAD…PEPRRALMSA (85 aa)) the chain is Cytoplasmic. Residues 86-161 (SDADHYHREL…LEKPEPRRAL (76 aa)) form a cytoplasmic metal binding domain (MBD) region. The Fe cation site is built by E98, E101, E109, E112, M145, and E149. A helical transmembrane segment spans residues 165-185 (GTIALAYVVGGLVPLLPYMFV). The Vacuolar segment spans residues 186 to 190 (PTADR). The helical transmembrane segment at 191–211 (AMATSVVVTLAALLFFGYVKG) threads the bilayer. At 212-218 (RFTGNRP) the chain is on the cytoplasmic side. Residues 219–239 (FISAFQTAVIGALASAAAFGM) traverse the membrane as a helical segment. Over 240 to 246 (AKAVQSI) the chain is Vacuolar.

The protein belongs to the CCC1 family. As to quaternary structure, homodimer. The dimeric interaction is mediated by both the transmembrane domains (TMDs) and the cytoplasmic metal binding domain (MBD). In terms of tissue distribution, expressed in leaf sheaths and at lower level in leaf blades.

It localises to the vacuole membrane. It catalyses the reaction Fe(2+)(in) = Fe(2+)(out). Vacuolar iron transporter involved in the transfer of iron ions from the cytosol to the vacuole for intracellular iron storage. Vacuolar iron storage is required for seed embryo and seedling development. May be involved in the regulation of iron translocation between flag leaves and seeds. Can transport zinc ions from the cytosol to the vacuole. This chain is Vacuolar iron transporter 2, found in Oryza sativa subsp. japonica (Rice).